We begin with the raw amino-acid sequence, 229 residues long: Glucose-induced degradation protein 8-B homolog (229 aa).

The LisH domain maps to 26 to 58 (QRADMNRLIMNYLVTEGFKEAAEKFRMESGIEP). Residues 64–121 (SLDERIKIREMVLKGQIQEAIALINSLHPELLDTNRYLYFHLQQQHLIELIRLRETEA) enclose the CTLH domain.

In terms of assembly, identified in the CTLH complex that contains at least MAEA, RMND5A (or alternatively its paralog RMND5B), GID8, WDR26, and RANBP9 and/or RANBP10. Interacts with CTNNB1.

Its subcellular location is the cytoplasm. It localises to the nucleus. Its function is as follows. Core component of the CTLH E3 ubiquitin-protein ligase complex that selectively accepts ubiquitin from UBE2H and mediates ubiquitination and subsequent proteasomal degradation of target proteins. Acts as a positive regulator of Wnt signaling pathway by promoting beta-catenin (CTNNB1) nuclear accumulation. Required for normal Wnt signaling and normal dorsoventral patterning during embryogenesis. This Danio rerio (Zebrafish) protein is Glucose-induced degradation protein 8-B homolog (gid8b).